Consider the following 960-residue polypeptide: Gamma-aminobutyric acid type B receptor subunit 1 (960 aa).

An N-terminal signal peptide occupies residues 1–19; that stretch reads MLLLLLVPLFLRPLGAGGA. At 20-590 the chain is on the extracellular side; that stretch reads QTPNATSEGC…KTFRFLSQKL (571 aa). 2 N-linked (GlcNAc...) asparagine glycosylation sites follow: N23 and N83. 2 Sushi domains span residues 29–95 and 97–158; these read CQII…PSRC and RICS…HCQV. Disulfide bonds link C99–C144, C130–C156, and C219–C245. Residues S246, S269, H286, and Y366 each contribute to the 4-aminobutanoate site. The cysteines at positions 375 and 409 are disulfide-linked. 2 N-linked (GlcNAc...) asparagine glycosylation sites follow: N408 and N439. E465 contributes to the 4-aminobutanoate binding site. N481, N501, and N513 each carry an N-linked (GlcNAc...) asparagine glycan. Residues 591 to 611 traverse the membrane as a helical segment; the sequence is FISVSVLSSLGIVLAVVCLSF. The Cytoplasmic segment spans residues 612–630; it reads NIYNSHVRYIQNSQPNLNN. A helical transmembrane segment spans residues 631–651; sequence LTAVGCSLALAAVFPLGLDGY. At 652–666 the chain is on the extracellular side; it reads HIGRSQFPFVCQARL. Residues 667-687 form a helical membrane-spanning segment; sequence WLLGLGFSLGYGSMFTKIWWV. Over 688–709 the chain is Cytoplasmic; the sequence is HTVFTKKEEKKEWRKTLEPWKL. Residues 710–730 traverse the membrane as a helical segment; it reads YATVGLLVGMDVLTLAIWQIV. At 731–767 the chain is on the extracellular side; the sequence is DPLHRTIETFAKEEPKEDIDVSILPQLEHCSSKKMNT. A helical transmembrane segment spans residues 768–788; the sequence is WLGIFYGYKGLLLLLGIFLAY. Topologically, residues 789–803 are cytoplasmic; that stretch reads ETKSVSTEKINDHRA. A helical membrane pass occupies residues 804–824; that stretch reads VGMAIYNVAVLCLITAPVTMI. Residues 825-832 lie on the Extracellular side of the membrane; sequence LSSQQDAA. Residues 833–853 traverse the membrane as a helical segment; that stretch reads FAFASLAIVFSSYITLVVLFV. Residues 854-960 are Cytoplasmic-facing; it reads PKMRRLITRG…DGSRVHLLYK (107 aa). Residues 866–879 show a composition bias toward polar residues; that stretch reads QSETQDTMKTGSST. Disordered stretches follow at residues 866-891 and 908-960; these read QSET…RLLE and VSEL…LLYK. Positions 870-924 form a coiled coil; that stretch reads QDTMKTGSSTNNNEEEKSRLLEKENRELEKIIAEKEERVSELRHQLQSRQQLRSR. T872 is subject to Phosphothreonine. The tract at residues 887–915 is interaction with ATF4; the sequence is SRLLEKENRELEKIIAEKEERVSELRHQL. The residue at position 929 (T929) is a Phosphothreonine.

This sequence belongs to the G-protein coupled receptor 3 family. GABA-B receptor subfamily. Heterodimer of GABBR1 and GABBR2. Homodimers may form, but are inactive. Interacts (via C-terminus) with ATF4 (via leucine zipper domain). Interacts with JAKMIP1. In terms of tissue distribution, ubiquitously expressed in tissues including the forebrain, cerebellum, eye, atrium, ventricle, lung, stomach, small intestine, colon, liver, spleen, kidney, urinary bladder and skeletal muscle. Expressed at low levels in testis, and more highly in brain regions. Expression is high the brain regions including cerebral cortical layers, with higher expression in VIb than in the II-V layers, pyramidal CA1-CA3 cell layers and granular cell layers of the hippocampus, granular cell layers of the dentate gyrus, including the caudate, putamen, nucleus accumbens and olfactory tubercle, the granular layer cell layers of the medial habenula, in the cerebellum, predominantly in Purkinje cells, and in the granule cell layer. Also expressed in areas of the brain including the medial geniculate nucleus, substantia nigra, pars compacta, the ventral tegmental area, and in several thalamic, amygdaloid and hypothalamic nuclei, such as the arcuate nucleus of the hypothalamus and mammilary bodies of the hypothalamus. Expressed in the amacrine cell of the retina. As to expression, expressed in the brain, spinal cord, stomach, testis, adrenal gland, pituitary, spleen and prostate. Expressed in the brain, spinal cord, stomach, testis, kidney and liver. In terms of tissue distribution, ubiquitously expressed. As to expression, expressed in the forebrain, cerebellum, eye, kidney and urinary bladder. Ubiquitously expressed with high expression in the pyramidal CA1-CA3 cell layers of the hippocampus, the granule cell layers of the dentate gyrus and olfactory tubercle, the whole cortex, and Purkinje cells of the cerebellum. Moderate expression in the granule cell layer of the cerebellum.

It localises to the cell membrane. The protein localises to the postsynaptic cell membrane. It is found in the cell projection. Its subcellular location is the dendrite. The protein resides in the perikaryon. Component of a heterodimeric G-protein coupled receptor for GABA, formed by GABBR1 and GABBR2. Within the heterodimeric GABA receptor, only GABBR1 seems to bind agonists, while GABBR2 mediates coupling to G proteins. Ligand binding causes a conformation change that triggers signaling via guanine nucleotide-binding proteins (G proteins) and modulates the activity of down-stream effectors, such as adenylate cyclase. Signaling inhibits adenylate cyclase, stimulates phospholipase A2, activates potassium channels, inactivates voltage-dependent calcium-channels and modulates inositol phospholipid hydrolysis. Calcium is required for high affinity binding to GABA. Plays a critical role in the fine-tuning of inhibitory synaptic transmission. Pre-synaptic GABA receptor inhibits neurotransmitter release by down-regulating high-voltage activated calcium channels, whereas postsynaptic GABA receptor decreases neuronal excitability by activating a prominent inwardly rectifying potassium (Kir) conductance that underlies the late inhibitory postsynaptic potentials. Not only implicated in synaptic inhibition but also in hippocampal long-term potentiation, slow wave sleep, muscle relaxation and antinociception. In Rattus norvegicus (Rat), this protein is Gamma-aminobutyric acid type B receptor subunit 1 (Gabbr1).